Consider the following 172-residue polypeptide: Large ribosomal subunit protein uL10 (172 aa).

This sequence belongs to the universal ribosomal protein uL10 family. Part of the ribosomal stalk of the 50S ribosomal subunit. The N-terminus interacts with L11 and the large rRNA to form the base of the stalk. The C-terminus forms an elongated spine to which L12 dimers bind in a sequential fashion forming a multimeric L10(L12)X complex.

Its function is as follows. Forms part of the ribosomal stalk, playing a central role in the interaction of the ribosome with GTP-bound translation factors. The chain is Large ribosomal subunit protein uL10 from Pelodictyon phaeoclathratiforme (strain DSM 5477 / BU-1).